We begin with the raw amino-acid sequence, 405 residues long: Tryptophan synthase beta chain (405 aa).

Lysine 98 carries the post-translational modification N6-(pyridoxal phosphate)lysine.

Belongs to the TrpB family. Tetramer of two alpha and two beta chains. It depends on pyridoxal 5'-phosphate as a cofactor.

It carries out the reaction (1S,2R)-1-C-(indol-3-yl)glycerol 3-phosphate + L-serine = D-glyceraldehyde 3-phosphate + L-tryptophan + H2O. It participates in amino-acid biosynthesis; L-tryptophan biosynthesis; L-tryptophan from chorismate: step 5/5. The beta subunit is responsible for the synthesis of L-tryptophan from indole and L-serine. In Xylella fastidiosa (strain 9a5c), this protein is Tryptophan synthase beta chain (trpB).